Here is a 260-residue protein sequence, read N- to C-terminus: uncharacterized protein (260 aa).

Positions 1 to 38 (MNWTREIEQYKQVVASYKLKMKRMEMKISDISEEKRQS) form a coiled coil.

This is an uncharacterized protein from Caenorhabditis elegans.